We begin with the raw amino-acid sequence, 443 residues long: Cyclin-A2-1 (443 aa).

The span at 1–10 (MHRASSKHTN) shows a compositional bias: basic residues. Positions 1-61 (MHRASSKHTN…KRVARPSNKR (61 aa)) are disordered. Residues 11–25 (AKKEAISTSKIRDNN) show a composition bias toward basic and acidic residues.

This sequence belongs to the cyclin family. Cyclin AB subfamily. In terms of tissue distribution, expressed in tissues with active cell division: apical root and shoot meristems, lateral root and leaf primordia, floral meristems and developing pollen.

May negatively regulate endocycles and act as a regulator of ploidy levels in endoreduplication. The protein is Cyclin-A2-1 (CYCA2-1) of Arabidopsis thaliana (Mouse-ear cress).